We begin with the raw amino-acid sequence, 148 residues long: Large ribosomal subunit protein bL9 (148 aa).

This sequence belongs to the bacterial ribosomal protein bL9 family.

Functionally, binds to the 23S rRNA. The protein is Large ribosomal subunit protein bL9 of Bacillus cereus (strain ATCC 10987 / NRS 248).